Reading from the N-terminus, the 266-residue chain is MHINYVISLTSAYQRREHIQKEFSQQNIPFEFFDALKPSKELTSLIEKFIPNLLHAKLTEGEKACFMSHYMLWQKCFSEDLPYIYIFEDDVLLGENADKFLAEDEWLEEAFKQTDKFILRFETFLNFSKCKDKKIKPYSGRKILKLVSENCGAAGYVISREAVKQLSAHICSLTSNHLLAIDLLMFNIFNQSTYQVSPGVCVQEGQLYPKDIKLHSQLETERQKYLSVKKKRTLKTVLISLAGKPKKILRKIYRKLFISKHIVPFR.

It belongs to the glycosyltransferase 25 family.

In terms of biological role, involved in extracellular lipooligosaccharide (LOS) biosynthesis and virulence expression. Involved in the synthesis of the oligosaccharide moiety of the LOS molecule by adding GalNAc. The protein is Lipooligosaccharide biosynthesis protein lic2B (lic2B) of Haemophilus influenzae.